A 500-amino-acid polypeptide reads, in one-letter code: L-arabinose isomerase (500 aa).

Glu-306, Glu-333, His-350, and His-450 together coordinate Mn(2+).

The protein belongs to the arabinose isomerase family. Homohexamer. Requires Mn(2+) as cofactor.

It carries out the reaction beta-L-arabinopyranose = L-ribulose. It participates in carbohydrate degradation; L-arabinose degradation via L-ribulose; D-xylulose 5-phosphate from L-arabinose (bacterial route): step 1/3. Catalyzes the conversion of L-arabinose to L-ribulose. This Shigella boydii serotype 18 (strain CDC 3083-94 / BS512) protein is L-arabinose isomerase.